The chain runs to 170 residues: Small ribosomal subunit protein eS7 (170 aa).

The protein belongs to the eukaryotic ribosomal protein eS7 family. As to quaternary structure, component of the small ribosomal subunit.

It is found in the cytoplasm. The protein is Small ribosomal subunit protein eS7 (RPS7) of Encephalitozoon cuniculi (strain GB-M1) (Microsporidian parasite).